Consider the following 136-residue polypeptide: Nucleoside diphosphate kinase (136 aa).

6 residues coordinate ATP: Lys-9, Phe-57, Arg-85, Thr-91, Arg-102, and Asn-112. His-115 (pros-phosphohistidine intermediate) is an active-site residue.

This sequence belongs to the NDK family. Homotetramer. Mg(2+) serves as cofactor.

It is found in the cytoplasm. The catalysed reaction is a 2'-deoxyribonucleoside 5'-diphosphate + ATP = a 2'-deoxyribonucleoside 5'-triphosphate + ADP. The enzyme catalyses a ribonucleoside 5'-diphosphate + ATP = a ribonucleoside 5'-triphosphate + ADP. Its function is as follows. Major role in the synthesis of nucleoside triphosphates other than ATP. The ATP gamma phosphate is transferred to the NDP beta phosphate via a ping-pong mechanism, using a phosphorylated active-site intermediate. This chain is Nucleoside diphosphate kinase, found in Acetivibrio thermocellus (strain ATCC 27405 / DSM 1237 / JCM 9322 / NBRC 103400 / NCIMB 10682 / NRRL B-4536 / VPI 7372) (Clostridium thermocellum).